The primary structure comprises 283 residues: Phospholipid phosphatase 1 (283 aa).

The Cytoplasmic portion of the chain corresponds to 1–6 (MFDKTR). Residues 5-7 (TRL) carry the PDZ-binding; involved in localization to the apical cell membrane motif. Residues 7–27 (LPYVALDVICVLLAGLPFAIL) form a helical membrane-spanning segment. Residues 28 to 53 (TSRHTPFQRGIFCNDDSIKYPYKEDT) are Extracellular-facing. The helical transmembrane segment at 54 to 74 (IPYALLGGIVIPFCIIVMSIG) threads the bilayer. Residues 75 to 88 (ESLSVYFNVLHSNS) are Cytoplasmic-facing. Residues 89–109 (FVGNPYIATIYKAVGAFLFGV) form a helical membrane-spanning segment. The Extracellular portion of the chain corresponds to 110–164 (SASQSLTDIAKYTIGSLRPHFLAICNPDWSKINCSDGYIEDYICQGNEEKVKEGR). A phosphatase sequence motif I region spans residues 120 to 128 (KYTIGSLRP). N-linked (GlcNAc...) asparagine glycosylation is present at Asn-142. Residues 165 to 185 (LSFYSGHSSFSMYCMLFVALY) traverse the membrane as a helical segment. Residues 168-171 (YSGH) are phosphatase sequence motif II. Catalysis depends on His-171, which acts as the Proton donors. Residues 186 to 199 (LQARMKGDWARLLR) lie on the Cytoplasmic side of the membrane. A helical membrane pass occupies residues 200–220 (PMLQFGLIAFSIYVGLSRVSD). The interval 216–227 (SRVSDYKHHWSD) is phosphatase sequence motif III. At 221-229 (YKHHWSDVT) the chain is on the extracellular side. Residue His-223 is the Nucleophile of the active site. The helical transmembrane segment at 230–250 (VGLIQGAAMAILVALYVSDFF) threads the bilayer. Residues 251 to 283 (KDTHSYKERKEEDPHTTLHETASSRNYSTNHEP) lie on the Cytoplasmic side of the membrane. A disordered region spans residues 260–283 (KEEDPHTTLHETASSRNYSTNHEP). Residues 269 to 283 (HETASSRNYSTNHEP) show a composition bias toward polar residues.

This sequence belongs to the PA-phosphatase related phosphoesterase family. In terms of assembly, forms functional homodimers and homooligomers that are not required for substrate recognition and catalytic activity. Can also form heterooligomers with PLPP2 and PLPP3. In terms of processing, N-glycosylated. N-linked sugars are of the complex type. N-glycosylation is not required for the phosphatase activity. In terms of tissue distribution, widely expressed. Highly expressed in kidney and lung. Almost undetectable in brain, heart, bone, muscle or spleen.

It localises to the cell membrane. Its subcellular location is the apical cell membrane. The protein localises to the membrane raft. It is found in the membrane. The protein resides in the caveola. It catalyses the reaction a 1,2-diacyl-sn-glycero-3-phosphate + H2O = a 1,2-diacyl-sn-glycerol + phosphate. It carries out the reaction 1,2-dihexadecanoyl-sn-glycero-3-phosphate + H2O = 1,2-dihexadecanoyl-sn-glycerol + phosphate. The enzyme catalyses 1,2-di-(9Z-octadecenoyl)-sn-glycero-3-phosphate + H2O = 1,2-di-(9Z-octadecenoyl)-sn-glycerol + phosphate. The catalysed reaction is a monoacyl-sn-glycero-3-phosphate + H2O = a monoacylglycerol + phosphate. It catalyses the reaction (9Z)-octadecenoyl-sn-glycero-3-phosphate + H2O = (9Z-octadecenoyl)-glycerol + phosphate. It carries out the reaction a 1-acyl-sn-glycero-3-phosphate + H2O = a 1-acyl-sn-glycerol + phosphate. The enzyme catalyses 1-(9Z-octadecenoyl)-sn-glycero-3-phosphate + H2O = 1-(9Z-octadecenoyl)-sn-glycerol + phosphate. The catalysed reaction is a 1,2-diacyl-sn-glycerol 3-diphosphate + H2O = a 1,2-diacyl-sn-glycero-3-phosphate + phosphate + H(+). It catalyses the reaction sphing-4-enine 1-phosphate + H2O = sphing-4-enine + phosphate. It carries out the reaction an N-acylsphing-4-enine 1-phosphate + H2O = an N-acylsphing-4-enine + phosphate. The enzyme catalyses N-(octanoyl)-sphing-4-enine-1-phosphate + H2O = N-octanoylsphing-4-enine + phosphate. The catalysed reaction is N-(9Z-octadecenoyl)-ethanolamine phosphate + H2O = N-(9Z-octadecenoyl) ethanolamine + phosphate. It catalyses the reaction 1-hexadecanoyl-2-(9Z-octadecenoyl)-sn-glycero-3-phosphate + H2O = 1-hexadecanoyl-2-(9Z-octadecenoyl)-sn-glycerol + phosphate. It functions in the pathway lipid metabolism; phospholipid metabolism. Its activity is regulated as follows. Magnesium-independent phospholipid phosphatase. Insensitive to N-ethylmaleimide. Its function is as follows. Magnesium-independent phospholipid phosphatase of the plasma membrane that catalyzes the dephosphorylation of a variety of glycerolipid and sphingolipid phosphate esters including phosphatidate/PA, lysophosphatidate/LPA, diacylglycerol pyrophosphate/DGPP, sphingosine 1-phosphate/S1P and ceramide 1-phosphate/C1P. Also acts on N-oleoyl ethanolamine phosphate/N-(9Z-octadecenoyl)-ethanolamine phosphate, a potential physiological compound. Through its extracellular phosphatase activity allows both the hydrolysis and the cellular uptake of these bioactive lipid mediators from the milieu, regulating signal transduction in different cellular processes. It is for instance essential for the extracellular hydrolysis of S1P and subsequent conversion into intracellular S1P. Involved in the regulation of inflammation, platelets activation, cell proliferation and migration among other processes. May also have an intracellular activity to regulate phospholipid-mediated signaling pathways. The sequence is that of Phospholipid phosphatase 1 from Mus musculus (Mouse).